The sequence spans 253 residues: MTTIDLNCDLGESFGAYKMGNDDEILPFVSSINVACGFHAGDPSVMRQTVEKALQHNVAIGAHPGFPDLIGFGRRNMNVSASEVYDYVLYQIGALDAFVKAAGGKMQHVKPHGALYNMAATNPEIADAIAKAIYHSNPNLLLYGLANSEAFIQAAEKYNITLVQEAFADRTYKQDGTLTSRTEENALIKNEDEAIKQVLQMVKEGYVNSVNGEKVEVQAKTICLHGDSEKAVQFAERIYRTFELNGISICAPK.

This sequence belongs to the LamB/PxpA family. As to quaternary structure, forms a complex composed of PxpA, PxpB and PxpC.

It carries out the reaction 5-oxo-L-proline + ATP + 2 H2O = L-glutamate + ADP + phosphate + H(+). Catalyzes the cleavage of 5-oxoproline to form L-glutamate coupled to the hydrolysis of ATP to ADP and inorganic phosphate. In Bacillus cereus (strain ATCC 10987 / NRS 248), this protein is 5-oxoprolinase subunit A.